We begin with the raw amino-acid sequence, 551 residues long: Rqc2 homolog RqcH (551 aa).

The protein belongs to the NEMF family. As to quaternary structure, associates with stalled 50S ribosomal subunits, binds to RqcP. Interacts with human fibronectin.

The protein resides in the secreted. Its subcellular location is the capsule. It localises to the cell surface. It is found in the cytoplasm. Its function is as follows. Key component of the ribosome quality control system (RQC), a ribosome-associated complex that mediates the extraction of incompletely synthesized nascent chains from stalled ribosomes and their subsequent degradation. RqcH recruits Ala-charged tRNA, and with RqcP directs the elongation of stalled nascent chains on 50S ribosomal subunits, leading to non-templated C-terminal alanine extensions (Ala tail). The Ala tail promotes nascent chain degradation. May add between 1 and at least 8 Ala residues. Binds to stalled 50S ribosomal subunits. Plays a significant role in virulence. Recombinant protein binds to immobilized human fibronectin; binding is saturable and competed by heparin. Purified protein inhibits binding of whole cells to fibronectin. This is Rqc2 homolog RqcH from Streptococcus pneumoniae serotype 2 (strain D39 / NCTC 7466).